The sequence spans 289 residues: Serine/threonine-protein phosphatase Pgam5, mitochondrial (289 aa).

A helical membrane pass occupies residues 7–23 (FACGTGAGLAAYYLQKL).

This sequence belongs to the phosphoglycerate mutase family. BPG-dependent PGAM subfamily. In terms of assembly, interacts with Pk92B/ASK1.

It is found in the mitochondrion outer membrane. It carries out the reaction O-phospho-L-seryl-[protein] + H2O = L-seryl-[protein] + phosphate. The catalysed reaction is O-phospho-L-threonyl-[protein] + H2O = L-threonyl-[protein] + phosphate. In terms of biological role, displays phosphatase activity for serine/threonine residues, and dephosphorylates and activates Pk92B kinase. Has apparently no phosphoglycerate mutase activity. The protein is Serine/threonine-protein phosphatase Pgam5, mitochondrial of Drosophila virilis (Fruit fly).